The following is a 93-amino-acid chain: Long neurotoxin 2 (93 aa).

The N-terminal stretch at 1-21 is a signal peptide; it reads MKILLLTLVVVTIVCLDLAYT. Cystine bridges form between cysteine 24/cysteine 42, cysteine 35/cysteine 63, cysteine 48/cysteine 52, cysteine 67/cysteine 78, and cysteine 79/cysteine 84.

Belongs to the three-finger toxin family. Long-chain subfamily. Type II alpha-neurotoxin sub-subfamily. As to expression, expressed by the venom gland.

The protein localises to the secreted. In terms of biological role, binds with high affinity to muscular (alpha-1/CHRNA1) and neuronal (alpha-7/CHRNA7) nicotinic acetylcholine receptor (nAChR) and inhibits acetylcholine from binding to the receptor, thereby impairing neuromuscular and neuronal transmission. In Hydrophis hardwickii (Hardwick's spine-bellied seasnake), this protein is Long neurotoxin 2.